Consider the following 1183-residue polypeptide: Spermatogenesis-associated protein 31G1 (1183 aa).

Disordered stretches follow at residues 109-153 (TPIG…FPTF), 469-555 (LMPA…SPWA), 661-686 (TVDD…SSEP), 843-884 (ASQG…VSEV), 973-1032 (CLHS…TGLL), and 1048-1087 (QKRG…PAEA). A compositionally biased stretch (basic and acidic residues) spans 124-134 (CRSEGRPRATE). Residues 135-153 (TQEQVLIQSPSPSRSFPTF) show a composition bias toward polar residues. Residues 487-509 (NPKERLSAPKDVRENLGYREHPH) are compositionally biased toward basic and acidic residues. The span at 671-685 (TGKNTDNTKKCSSSE) shows a compositional bias: polar residues. Residues 847–858 (PNPPAVNPPQPT) show a composition bias toward pro residues. Over residues 975 to 984 (HSSSQPQAQA) the composition is skewed to polar residues. Residues 993-1002 (QKSKRLKRKA) are compositionally biased toward basic residues. Residues 1069 to 1079 (SPTNTRENNPA) show a composition bias toward polar residues.

As to expression, expressed in kidney and testis. Expressed at lower levels in stomach, intestine, epididymis and ovary. Expressed at very low levels in heart and spleen.

Its function is as follows. Dispensable for normal development and fertility. This chain is Spermatogenesis-associated protein 31G1 (Spata31g1), found in Mus musculus (Mouse).